We begin with the raw amino-acid sequence, 457 residues long: Multidrug resistance protein MdtK (457 aa).

12 helical membrane-spanning segments follow: residues 11–31, 53–73, 93–113, 127–147, 160–180, 191–211, 243–263, 276–296, 316–336, 350–370, 387–407, and 418–438; these read LLALAIPVILAQVAQTAMGFV, IWLPAILFGHGLLLALTPVVA, WLAGFVSVLIMVVLWNAGYII, AVGYLRALLWGAPGYLFFQVA, GMVMGFIGLLVNIPVNYIFIY, VGCGVATASVYWVMFASMLWW, LPIALALFFEVTLFAVVALLV, IALNFSSLMFVLPLSLAAAVT, RTGVGVGVCLAVFTAIFTVLM, VVLLASHLMLLAAIYQISDSI, IFFITFTAYWVLGLPSGYLLA, and PAGFWCGFIIGLTSAAIMMML.

It belongs to the multi antimicrobial extrusion (MATE) (TC 2.A.66.1) family. MdtK subfamily.

Its subcellular location is the cell inner membrane. In terms of biological role, multidrug efflux pump that functions probably as a Na(+)/drug antiporter. In Klebsiella pneumoniae (strain 342), this protein is Multidrug resistance protein MdtK.